A 1526-amino-acid polypeptide reads, in one-letter code: Cell wall protein IFF4 (1526 aa).

The first 20 residues, 1–20 (MKFLQKFIITVALLTNIVFA), serve as a signal peptide directing secretion. N-linked (GlcNAc...) asparagine glycans are attached at residues asparagine 93 and asparagine 498. Residues 512-541 (SSAGGSSFPEETHMLQTSDSDLSSTAGSES) are disordered. Residues 525-541 (MLQTSDSDLSSTAGSES) are compositionally biased toward polar residues. The N-linked (GlcNAc...) asparagine glycan is linked to asparagine 637. Residues 1180–1207 (WNGAKSDSPHTSESDITSQYNSHSTSVA) are disordered. The segment covering 1193–1207 (SDITSQYNSHSTSVA) has biased composition (polar residues). Residues asparagine 1451, asparagine 1463, asparagine 1479, asparagine 1502, and asparagine 1506 are each glycosylated (N-linked (GlcNAc...) asparagine). A disordered region spans residues 1455-1483 (SSVSGYPTNRSDSNGYANTPTTGSNTSGD). Asparagine 1502 is lipidated: GPI-anchor amidated asparagine. Positions 1503-1526 (GSTNISNKYLKFLGTVVSILILLI) are cleaved as a propeptide — removed in mature form.

The protein belongs to the HYR1/IFF family. Post-translationally, the GPI-anchor is attached to the protein in the endoplasmic reticulum and serves to target the protein to the cell surface. There, the glucosamine-inositol phospholipid moiety is cleaved off and the GPI-$modified mannoprotein is covalently attached via its lipidless GPI glycan remnant to the 1,6-beta-glucan of the outer cell wall layer.

It localises to the secreted. The protein localises to the cell wall. It is found in the membrane. In terms of biological role, GPI-anchored cell wall protein involved in cell wall organization, hyphal growth, as well as in host-fungal interaction and virulence. Plays a role in adherence to plastic and to host epithelial cells. Promotes the tissue fungal burden during murine vaginal candidiasis. Also increases susceptibility to neutrophil-mediated killing. Furthermore, contributes to the severity of hematogenously disseminated candidiasis in normal mice, but not in neutropenic mice. The chain is Cell wall protein IFF4 (IFF4) from Candida albicans (strain SC5314 / ATCC MYA-2876) (Yeast).